The primary structure comprises 475 residues: Tubulin gamma-1 chain (475 aa).

142–148 (AGGTGSG) provides a ligand contact to GTP. A disordered region spans residues 453–475 (VKRGNGPVDSKSEDSRSVTSAGS).

This sequence belongs to the tubulin family. As to quaternary structure, interacts with Ote.

It localises to the cytoplasm. It is found in the cytoskeleton. The protein localises to the microtubule organizing center. The protein resides in the centrosome. Its subcellular location is the perinuclear region. Functionally, tubulin is the major constituent of microtubules. The gamma chain is found at microtubule organizing centers (MTOC) such as the spindle poles or the centrosome, suggesting that it is involved in the minus-end nucleation of microtubule assembly. This chain is Tubulin gamma-1 chain (gammaTub23C), found in Drosophila melanogaster (Fruit fly).